The primary structure comprises 434 residues: MLDIKWIRDNPKALVEALAKRSWSAGEAQSTVDDLIARDEARREHVTELQTKQERRNAASKEIGNAMRSGDAALAEKLKAEVGDIKTFIQNGEARERELDKALTDALAVLPNVPLDDVPVGKDEHDNVVKHIVGKVPTRSNWVKEHFEIGEALGMMDFERAAKLSGSRFTVLKSGLARMERAIGQFMLDLHTTEHGYEEVIPPLMVRDEVLFGTNQLPKFEEDLFFTPHGEGRLGLIPTAEVPLTNLVREEITAHEKLPLRFTALTPCFRSEAGSAGRDTRGMLRQHQFYKVELVSITDQDSSLAEHERMTQCAEEVLKRLELPFRTMVLCTGDMGFGARKTYDIEVWLPGQNAYREISSCSVCGDFQARRMDARYKDKDGKGNRFVHTLNGSGTAVGRALIAVIENYQNEDGSVTIPEVLRPYMGGLAKIEAK.

239-241 lines the L-serine pocket; the sequence is TAE. 270–272 is an ATP binding site; it reads RSE. E293 contributes to the L-serine binding site. An ATP-binding site is contributed by 357 to 360; the sequence is EISS. Residue S393 coordinates L-serine.

The protein belongs to the class-II aminoacyl-tRNA synthetase family. Type-1 seryl-tRNA synthetase subfamily. In terms of assembly, homodimer. The tRNA molecule binds across the dimer.

It is found in the cytoplasm. The enzyme catalyses tRNA(Ser) + L-serine + ATP = L-seryl-tRNA(Ser) + AMP + diphosphate + H(+). It carries out the reaction tRNA(Sec) + L-serine + ATP = L-seryl-tRNA(Sec) + AMP + diphosphate + H(+). It functions in the pathway aminoacyl-tRNA biosynthesis; selenocysteinyl-tRNA(Sec) biosynthesis; L-seryl-tRNA(Sec) from L-serine and tRNA(Sec): step 1/1. Catalyzes the attachment of serine to tRNA(Ser). Is also able to aminoacylate tRNA(Sec) with serine, to form the misacylated tRNA L-seryl-tRNA(Sec), which will be further converted into selenocysteinyl-tRNA(Sec). The sequence is that of Serine--tRNA ligase from Mesorhizobium japonicum (strain LMG 29417 / CECT 9101 / MAFF 303099) (Mesorhizobium loti (strain MAFF 303099)).